A 240-amino-acid chain; its full sequence is MQLIPAIDLRDGRCVRLVQGDFEQTTVYGDDPVAVAQQWEAAGAARIHIVDLDGAKAGRPTQTSTIAAITKAVSVPVQLGGGLRDAASIAAAFELGVSDVILGTVAVRNPELVAELVRQYGKAITIGIDARNGVVATEGWLASSRQRATELAEQMGQLGVARIIYTDISRDGTLSEPNYAQTAALVTPNGPAIIASGGIARVEHLARLAELGISGAIIGTALYTGHIDLASAIQTIEHGG.

The Proton acceptor role is filled by Asp-8. Residue Asp-129 is the Proton donor of the active site.

Belongs to the HisA/HisF family.

It localises to the cytoplasm. The catalysed reaction is 1-(5-phospho-beta-D-ribosyl)-5-[(5-phospho-beta-D-ribosylamino)methylideneamino]imidazole-4-carboxamide = 5-[(5-phospho-1-deoxy-D-ribulos-1-ylimino)methylamino]-1-(5-phospho-beta-D-ribosyl)imidazole-4-carboxamide. The protein operates within amino-acid biosynthesis; L-histidine biosynthesis; L-histidine from 5-phospho-alpha-D-ribose 1-diphosphate: step 4/9. This is 1-(5-phosphoribosyl)-5-[(5-phosphoribosylamino)methylideneamino] imidazole-4-carboxamide isomerase from Herpetosiphon aurantiacus (strain ATCC 23779 / DSM 785 / 114-95).